The sequence spans 688 residues: Glycine--tRNA ligase beta subunit (688 aa).

Belongs to the class-II aminoacyl-tRNA synthetase family. Tetramer of two alpha and two beta subunits.

It is found in the cytoplasm. It catalyses the reaction tRNA(Gly) + glycine + ATP = glycyl-tRNA(Gly) + AMP + diphosphate. This chain is Glycine--tRNA ligase beta subunit, found in Chromohalobacter salexigens (strain ATCC BAA-138 / DSM 3043 / CIP 106854 / NCIMB 13768 / 1H11).